Here is a 37-residue protein sequence, read N- to C-terminus: Cytochrome b6-f complex subunit 5 (37 aa).

Residues 5-25 traverse the membrane as a helical segment; it reads LLFGIVLGLIPVTLVGLFVAA.

Belongs to the PetG family. In terms of assembly, the 4 large subunits of the cytochrome b6-f complex are cytochrome b6, subunit IV (17 kDa polypeptide, PetD), cytochrome f and the Rieske protein, while the 4 small subunits are PetG, PetL, PetM and PetN. The complex functions as a dimer.

It localises to the plastid. Its subcellular location is the chloroplast thylakoid membrane. Functionally, component of the cytochrome b6-f complex, which mediates electron transfer between photosystem II (PSII) and photosystem I (PSI), cyclic electron flow around PSI, and state transitions. PetG is required for either the stability or assembly of the cytochrome b6-f complex. This chain is Cytochrome b6-f complex subunit 5, found in Rhodomonas salina (Cryptomonas salina).